Consider the following 172-residue polypeptide: Lectin (172 aa).

Positions 1–20 are cleaved as a signal peptide; that stretch reads MVWCLADLRAYVLVLLVISG. The C-type lectin domain occupies 36–172; it reads DCTPGWDCHF…ICKYTTPCRY (137 aa). Disulfide bonds link Cys65-Cys164 and Cys140-Cys156. An N-linked (GlcNAc...) asparagine glycan is attached at Asn93.

Heterodimer. In terms of tissue distribution, anterior part of oviduct.

The protein localises to the secreted. Functionally, may be involved in protection of eggs and embryos against microorganisms. Calcium-dependent lectin with specificity to D-glucose and D-glucosamine. Can agglutinate microorganisms in vivo. This is Lectin (LEC) from Pleurodeles waltl (Iberian ribbed newt).